Reading from the N-terminus, the 124-residue chain is NADH dehydrogenase [ubiquinone] 1 alpha subcomplex subunit 6 (124 aa).

This sequence belongs to the complex I LYR family.

The protein localises to the mitochondrion inner membrane. Functionally, accessory subunit of the mitochondrial membrane respiratory chain NADH dehydrogenase (Complex I), that is believed to be not involved in catalysis. Complex I functions in the transfer of electrons from NADH to the respiratory chain. The immediate electron acceptor for the enzyme is believed to be ubiquinone. The polypeptide is NADH dehydrogenase [ubiquinone] 1 alpha subcomplex subunit 6 (ndufa6) (Dictyostelium discoideum (Social amoeba)).